A 359-amino-acid chain; its full sequence is Chorismate synthase (359 aa).

Arg-47 is a binding site for NADP(+). Residues 123-125 (RSS), Gly-283, 298-302 (KPTSS), and Arg-326 each bind FMN.

The protein belongs to the chorismate synthase family. As to quaternary structure, homotetramer. FMNH2 is required as a cofactor.

The enzyme catalyses 5-O-(1-carboxyvinyl)-3-phosphoshikimate = chorismate + phosphate. The protein operates within metabolic intermediate biosynthesis; chorismate biosynthesis; chorismate from D-erythrose 4-phosphate and phosphoenolpyruvate: step 7/7. In terms of biological role, catalyzes the anti-1,4-elimination of the C-3 phosphate and the C-6 proR hydrogen from 5-enolpyruvylshikimate-3-phosphate (EPSP) to yield chorismate, which is the branch point compound that serves as the starting substrate for the three terminal pathways of aromatic amino acid biosynthesis. This reaction introduces a second double bond into the aromatic ring system. This is Chorismate synthase from Chlamydia pneumoniae (Chlamydophila pneumoniae).